The sequence spans 188 residues: dCTP deaminase (188 aa).

Residues 111 to 116, 135 to 137, Gln-156, Tyr-170, and Gln-180 each bind dCTP; these read KSTYAR and TLE. Glu-137 functions as the Proton donor/acceptor in the catalytic mechanism.

The protein belongs to the dCTP deaminase family. Homotrimer.

The catalysed reaction is dCTP + H2O + H(+) = dUTP + NH4(+). The protein operates within pyrimidine metabolism; dUMP biosynthesis; dUMP from dCTP (dUTP route): step 1/2. In terms of biological role, catalyzes the deamination of dCTP to dUTP. This is dCTP deaminase from Dichelobacter nodosus (strain VCS1703A).